Consider the following 223-residue polypeptide: Cytidylate kinase (223 aa).

12–20 (GPAGSGKST) is an ATP binding site.

It belongs to the cytidylate kinase family. Type 1 subfamily.

The protein resides in the cytoplasm. It carries out the reaction CMP + ATP = CDP + ADP. The catalysed reaction is dCMP + ATP = dCDP + ADP. This is Cytidylate kinase from Aster yellows witches'-broom phytoplasma (strain AYWB).